Reading from the N-terminus, the 380-residue chain is UPF0754 membrane protein Bsph_0374 (380 aa).

2 helical membrane passes run 1-21 (MDNF…IGGV) and 357-377 (MITV…GLIV).

It belongs to the UPF0754 family.

The protein localises to the cell membrane. This chain is UPF0754 membrane protein Bsph_0374, found in Lysinibacillus sphaericus (strain C3-41).